The primary structure comprises 521 residues: Spermidine transporter DUR31 (521 aa).

A helical membrane pass occupies residues 11–31; sequence AIIYLSYAFMLATGLFLAWKF. Residue asparagine 41 is glycosylated (N-linked (GlcNAc...) asparagine). A run of 12 helical transmembrane segments spans residues 47–67, 79–99, 117–137, 156–176, 187–207, 227–247, 264–284, 310–330, 354–374, 377–397, 406–426, and 453–473; these read IPLA…TTYA, LVYT…GPVI, FGMV…FLFM, ALGA…FGGF, GVCV…YIEI, LVYI…GFWL, IAAF…FLAV, WLVA…FDSL, IMLI…ADNI, IYLI…LGLA, GFDV…FGTV, and FGAF…SAAL.

The protein belongs to the sodium:solute symporter (SSF) (TC 2.A.21) family.

The protein resides in the membrane. The catalysed reaction is spermidine(in) = spermidine(out). Its function is as follows. Spermidine transporter that is also used by salivary gland-secreted histatin 5 (Hst 5) to enter into candidal cells. A major component of host nonimmune defense systems is salivary histatins, a family of small (3-4 kDa), histidine-rich, cationic proteins secreted by major salivary glands in humans and higher primates. Hst 5 is the most potent of the 12 histatin family members and has fungicidal activity against blastoconidial and filamentous forms of Candida albicans. DUR31 only functions under high concentrations of Hst 5. Hst 5 cojugates to spermidine to be uptaken by DUR31. The chain is Spermidine transporter DUR31 from Candida albicans (strain SC5314 / ATCC MYA-2876) (Yeast).